The chain runs to 466 residues: VGFKAGVKEYKLTYYTPEYETKDTDILAAFRVTPQPGVPPEEAGAAVAAESSTGTWTTVWTDGLTSLDRYKGRCYNIEPVLGETDQYICYVAYPLDLFEEGSVTNMFTSIVGNVFGFKALRALRLEDLRIPPAYIKTFQGPPHGIQVERDELNKYGRPLLGCTIKPKLGLSAKNYGRACYECLRGGLDFTKDDENVNSQPFMRWRDRFLFCAEAIYKAQAETGEIKGHYLNATAGTCEEMIKRAVFARELGVPIVMHDYLTGGFTANTSLAHYCRDNGLLLHIHRAMHAVIDRQKNHGMHFRVLAKALRLSGGDHIHSGTVVGKLEGERDITLGFVDLLRDDFIEKDRSRGIYFTQDWVSLPGVIPVASGGIHVWHMPALTEIFGDDSVLQFGGGTLGHPWGNAPGAVANRVALEACVQARNEGRDLAAEGNEIIREPSKWSPELAAACEVWKEIKFEFKAVDTLD.

K4 is subject to N6,N6,N6-trimethyllysine. 2 residues coordinate substrate: N113 and T163. K165 serves as the catalytic Proton acceptor. A substrate-binding site is contributed by K167. 3 residues coordinate Mg(2+): K191, D193, and E194. K191 is modified (N6-carboxylysine). Residue H284 is the Proton acceptor of the active site. 3 residues coordinate substrate: R285, H317, and S369.

This sequence belongs to the RuBisCO large chain family. Type I subfamily. In terms of assembly, heterohexadecamer of 8 large chains and 8 small chains; disulfide-linked. The disulfide link is formed within the large subunit homodimers. Mg(2+) serves as cofactor. Post-translationally, the disulfide bond which can form in the large chain dimeric partners within the hexadecamer appears to be associated with oxidative stress and protein turnover.

Its subcellular location is the plastid. The protein localises to the chloroplast. The enzyme catalyses 2 (2R)-3-phosphoglycerate + 2 H(+) = D-ribulose 1,5-bisphosphate + CO2 + H2O. It carries out the reaction D-ribulose 1,5-bisphosphate + O2 = 2-phosphoglycolate + (2R)-3-phosphoglycerate + 2 H(+). In terms of biological role, ruBisCO catalyzes two reactions: the carboxylation of D-ribulose 1,5-bisphosphate, the primary event in carbon dioxide fixation, as well as the oxidative fragmentation of the pentose substrate in the photorespiration process. Both reactions occur simultaneously and in competition at the same active site. The sequence is that of Ribulose bisphosphate carboxylase large chain from Justicia odora (Water willow).